The primary structure comprises 236 residues: Small ribosomal subunit protein uS2 (236 aa).

It belongs to the universal ribosomal protein uS2 family.

This is Small ribosomal subunit protein uS2 from Brevibacillus brevis (strain 47 / JCM 6285 / NBRC 100599).